We begin with the raw amino-acid sequence, 448 residues long: NK1 transcription factor-related protein 1 (448 aa).

The segment covering 1–13 (MSASGPEAPGDIP) has biased composition (low complexity). 3 disordered regions span residues 1 to 80 (MSAS…LRPT), 115 to 299 (ASAP…PRRA), and 350 to 397 (KWKK…GAPL). Positions 14-30 (ALPPPPQPGSGPAPPAP) are enriched in pro residues. Low complexity-rich tracts occupy residues 62–79 (PAAP…PLRP) and 115–129 (ASAP…SGRP). Over residues 130-139 (PRAEELERRA) the composition is skewed to basic and acidic residues. A compositionally biased stretch (acidic residues) spans 186-203 (SGDEVPDDEDDDEDEAPE). A compositionally biased stretch (basic and acidic residues) spans 205–214 (EAARGAEEAR). Composition is skewed to gly residues over residues 215 to 227 (GGGG…GSGC) and 259 to 270 (PPGGAAAPGGAG). The segment covering 271–280 (TTPQGTATAA) has biased composition (low complexity). A DNA-binding region (homeobox) is located at residues 296–355 (PRRARTAFTYEQLVALENKFKATRYLSVCERLNLALSLSLTETQVKIWFQNRRTKWKKQN). Residues 364 to 382 (TGGGGGPGPGAGPGTGLPG) are compositionally biased toward gly residues.

It belongs to the NK-1 homeobox family. In terms of tissue distribution, expressed in hemopoietic progenitor cells.

The protein localises to the nucleus. Functionally, may be required for the coordinated crosstalk of factors involved in the maintenance of energy homeostasis, possibly by regulating the transcription of specific factors involved in energy balance. This is NK1 transcription factor-related protein 1 from Homo sapiens (Human).